Here is a 313-residue protein sequence, read N- to C-terminus: Ribosomal RNA small subunit methyltransferase H (313 aa).

Residues 48–50, Asp68, Phe102, Asp120, and Gln127 contribute to the S-adenosyl-L-methionine site; that span reads GGH. Residues 290 to 313 form a disordered region; the sequence is TATEEEIDRNPRSRSAKLRAAARK. The span at 301 to 313 shows a compositional bias: basic residues; the sequence is RSRSAKLRAAARK.

This sequence belongs to the methyltransferase superfamily. RsmH family.

The protein localises to the cytoplasm. It catalyses the reaction cytidine(1402) in 16S rRNA + S-adenosyl-L-methionine = N(4)-methylcytidine(1402) in 16S rRNA + S-adenosyl-L-homocysteine + H(+). Functionally, specifically methylates the N4 position of cytidine in position 1402 (C1402) of 16S rRNA. This is Ribosomal RNA small subunit methyltransferase H from Koribacter versatilis (strain Ellin345).